A 338-amino-acid chain; its full sequence is Lipoate-protein ligase A (338 aa).

Residues 29 to 216 enclose the BPL/LPL catalytic domain; the sequence is PATQRVLFLW…AFFAYYGERV (188 aa). ATP-binding positions include R71, 76–79, and K134; that span reads GAVF. K134 serves as a coordination point for (R)-lipoate.

This sequence belongs to the LplA family. In terms of assembly, monomer.

Its subcellular location is the cytoplasm. The enzyme catalyses L-lysyl-[lipoyl-carrier protein] + (R)-lipoate + ATP = N(6)-[(R)-lipoyl]-L-lysyl-[lipoyl-carrier protein] + AMP + diphosphate + H(+). It participates in protein modification; protein lipoylation via exogenous pathway; protein N(6)-(lipoyl)lysine from lipoate: step 1/2. It functions in the pathway protein modification; protein lipoylation via exogenous pathway; protein N(6)-(lipoyl)lysine from lipoate: step 2/2. Its function is as follows. Catalyzes both the ATP-dependent activation of exogenously supplied lipoate to lipoyl-AMP and the transfer of the activated lipoyl onto the lipoyl domains of lipoate-dependent enzymes. The sequence is that of Lipoate-protein ligase A from Cronobacter sakazakii (strain ATCC BAA-894) (Enterobacter sakazakii).